We begin with the raw amino-acid sequence, 180 residues long: KxDL motif-containing protein 1 (180 aa).

Polar residues-rich tracts occupy residues threonine 130–isoleucine 144 and glutamine 158–isoleucine 170. The tract at residues threonine 130 to aspartate 180 is disordered.

Belongs to the KXD1 family. As to quaternary structure, associates with the BLOC-1 complex.

Its subcellular location is the lysosome membrane. Its function is as follows. As part of a BORC-like complex may play a role in lysosomes movement and localization at the cell periphery. Associated with the cytosolic face of lysosomes, this complex may couple lysosomes to microtubule plus-end-directed kinesin motor. May also be involved in the biogenesis of lysosome-related organelles such as melanosomes. The protein is KxDL motif-containing protein 1 (kxd1) of Xenopus laevis (African clawed frog).